Reading from the N-terminus, the 156-residue chain is Small ribosomal subunit protein uS7 (156 aa).

It belongs to the universal ribosomal protein uS7 family. Part of the 30S ribosomal subunit. Contacts proteins S9 and S11.

Functionally, one of the primary rRNA binding proteins, it binds directly to 16S rRNA where it nucleates assembly of the head domain of the 30S subunit. Is located at the subunit interface close to the decoding center, probably blocks exit of the E-site tRNA. This is Small ribosomal subunit protein uS7 from Streptococcus uberis (strain ATCC BAA-854 / 0140J).